The following is a 109-amino-acid chain: MYEEFPDVITFQSYVEQSNGEGGKTYKWVDEFTAAAHVQPISQEEYYKAQQLQTPIGYNIYTPYDDRIDKKMRVIYRGKIVTFIGDPVDLSGLQEITRIKGKEDGAYVG.

Belongs to the Caudoviricetes gp7/gp16 head completion protein family. Homododecamer. Interacts with the connector protein gp15. Interacts with the head-tail joining protein gp17.

The protein localises to the virion. Functionally, functions as a stopper that is part of the head-tail connector and that locks the viral DNA in the capsid. Following tail attachment to the entry receptor, seems to open by a diaphragm-like motion, allowing the genome to exit the capsid through the tail tube to the host cell. During assembly, functions as a docking platform which the preassembled tail tapered by the head-tail joining protein gp17 can bind to. The chain is Head completion protein gp16 (16) from Bacillus subtilis (Bacteriophage SPP1).